We begin with the raw amino-acid sequence, 225 residues long: Thymidine kinase (225 aa).

An ATP-binding site is contributed by 15–22 (GSMFSGKT). The interval 85–110 (KKQNHRTTTQCRSGDGTNNPGGVIPS) is disordered. A compositionally biased stretch (polar residues) spans 90 to 104 (RTTTQCRSGDGTNNP). Residue 121–124 (DEAN) participates in ATP binding. Catalysis depends on glutamate 122, which acts as the Proton acceptor. Cysteine 178, cysteine 181, cysteine 216, and cysteine 219 together coordinate Zn(2+).

It belongs to the thymidine kinase family. In terms of assembly, homotetramer.

The protein localises to the cytoplasm. It catalyses the reaction thymidine + ATP = dTMP + ADP + H(+). The sequence is that of Thymidine kinase from Haloquadratum walsbyi (strain DSM 16790 / HBSQ001).